We begin with the raw amino-acid sequence, 287 residues long: uncharacterized protein (287 aa).

The span at 1–17 (MRWQGRRESDNVEDRRN) shows a compositional bias: basic and acidic residues. Residues 1–29 (MRWQGRRESDNVEDRRNSSGGPSMGGPGF) form a disordered region. The chain crosses the membrane as a helical span at residues 38-60 (LILLIVVLVAGYYGVDLTGLMTG).

The protein localises to the membrane. This is an uncharacterized protein from Escherichia coli O6:H1 (strain CFT073 / ATCC 700928 / UPEC).